The sequence spans 211 residues: Arginine exporter protein ArgO (211 aa).

6 consecutive transmembrane segments (helical) span residues 1-21 (MISY…PLGP), 37-57 (LMIA…GIFG), 68-88 (LLAL…FGAL), 111-131 (IIAT…DTFV), 147-167 (WFAL…ALLA), and 179-199 (AQRI…FQLA).

The protein belongs to the LysE/ArgO transporter (TC 2.A.75) family.

The protein localises to the cell inner membrane. It catalyses the reaction L-arginine(in) = L-arginine(out). In terms of biological role, involved in the export of arginine. Important to control the intracellular level of arginine and the correct balance between arginine and lysine. This chain is Arginine exporter protein ArgO, found in Salmonella newport (strain SL254).